Consider the following 700-residue polypeptide: Glycine--tRNA ligase beta subunit (700 aa).

Belongs to the class-II aminoacyl-tRNA synthetase family. In terms of assembly, tetramer of two alpha and two beta subunits.

It is found in the cytoplasm. It catalyses the reaction tRNA(Gly) + glycine + ATP = glycyl-tRNA(Gly) + AMP + diphosphate. The polypeptide is Glycine--tRNA ligase beta subunit (Magnetococcus marinus (strain ATCC BAA-1437 / JCM 17883 / MC-1)).